The sequence spans 123 residues: Ig heavy chain V region HPCG14 (123 aa).

Residues 1–114 (EVKLVESGGG…GYDYWFDVWG (114 aa)) form the Ig-like domain.

This chain is Ig heavy chain V region HPCG14, found in Mus musculus (Mouse).